The following is a 355-amino-acid chain: DNA-directed RNA polymerase subunit alpha (355 aa).

The interval 1–248 (MYYDDGIPVF…EQLQPFISSD (248 aa)) is alpha N-terminal domain (alpha-NTD). Residues 267 to 355 (YDPILLRKVD…ELARQHTDED (89 aa)) form an alpha C-terminal domain (alpha-CTD) region.

Belongs to the RNA polymerase alpha chain family. Homodimer. The RNAP catalytic core consists of 2 alpha, 1 beta, 1 beta' and 1 omega subunit. When a sigma factor is associated with the core the holoenzyme is formed, which can initiate transcription.

The catalysed reaction is RNA(n) + a ribonucleoside 5'-triphosphate = RNA(n+1) + diphosphate. Its function is as follows. DNA-dependent RNA polymerase catalyzes the transcription of DNA into RNA using the four ribonucleoside triphosphates as substrates. The chain is DNA-directed RNA polymerase subunit alpha from Wolbachia sp. subsp. Brugia malayi (strain TRS).